A 520-amino-acid chain; its full sequence is Endosomal/lysosomal proton channel TMEM175 (520 aa).

Positions 1-27 (MGENDESEIIEHHDDEEMEKRRPPRTH) are disordered. Residues 1 to 49 (MGENDESEIIEHHDDEEMEKRRPPRTHAQSFLESVASSVKEGHSSTQSS) are Cytoplasmic-facing. The span at 9-21 (IIEHHDDEEMEKR) shows a compositional bias: basic and acidic residues. A helical membrane pass occupies residues 50–72 (HRLLAYSDALISIIATVMILPVA). The RxxxFSD motif 1 motif lies at 51–57 (RLLAYSD). At 73-93 (HTKIQEDEELKQSIQALLTTK) the chain is on the lumenal side. The short helix H1-1 stretch occupies residues 74–79 (TKIQED). The interval 81–87 (ELKQSIQ) is short helix H2-1. Residues 94 to 116 (IAVYLMTFLIVTVAWAAHIRLFQ) traverse the membrane as a helical segment. Residues 117–122 (VIERID) lie on the Cytoplasmic side of the membrane. The chain crosses the membrane as a helical span at residues 123-144 (DTLALLNLACMMLITFLPYTFS). Residues 145–154 (LMATFPNNIL) are Lumenal-facing. The chain crosses the membrane as a helical span at residues 155–176 (GILLFCACVMVIGLIQALIVLY). Residues 177–200 (GFSHPFLLNDQIQMSENQAYYKQH) lie on the Cytoplasmic side of the membrane. The next 2 membrane-spanning stretches (helical) occupy residues 201–221 (ILKV…FSFI) and 222–242 (FFQL…ISQC). Over 243-274 (LKWIRSKAIGGQTDESPDSMPFYTYHPSEPLS) the chain is Cytoplasmic. The helical transmembrane segment at 275 to 299 (KERVEAFSDGVFAIVATLLILDICE) threads the bilayer. Residues 277 to 283 (RVEAFSD) carry the RxxxFSD motif 2 motif. Residues 300–326 (GNVPDPSVVKKKFDNSLIAALQEYGPE) lie on the Lumenal side of the membrane. The tract at residues 305 to 313 (PSVVKKKFD) is short helix H1-2. The tract at residues 315 to 321 (SLIAALQ) is short helix H2-2. A helical membrane pass occupies residues 327–349 (YLAYFGSFVTVGLLWFVHHSLFL). The Cytoplasmic segment spans residues 350 to 355 (HVTKAT). The helical transmembrane segment at 356–377 (RLMGLFNTFSLAFVGGLPLAYQ) threads the bilayer. Topologically, residues 378-392 (LTHESPRGSRNELEA) are lumenal. A helical transmembrane segment spans residues 393–413 (VQISCVIIFFASLFQLAIWVT). Residues 414-433 (ALFTERETLHPYVRYGGREH) lie on the Cytoplasmic side of the membrane. The chain crosses the membrane as a helical span at residues 434 to 457 (TFMLAKLSLYPCVALGTFFITCIL). Residues 458–459 (SR) are Lumenal-facing. Residues 460-486 (FSAPIFHMMEICIPFAFLLLRLLVRVA) traverse the membrane as a helical segment. Topologically, residues 487–520 (LALLRWLFCSARNDLERIPVEEEESRLPINDIVT) are cytoplasmic.

The protein belongs to the TMEM175 family. As to quaternary structure, homodimer.

Its subcellular location is the endosome membrane. The protein resides in the lysosome membrane. It catalyses the reaction H(+)(in) = H(+)(out). The enzyme catalyses K(+)(in) = K(+)(out). With respect to regulation, active at low pH (under pH 4.6): proton channel activity is activated by luminal side protons. Polyunsaturated fatty acids, such as arachidonic acid, also activate the channel activity. In terms of biological role, proton-activated proton channel that catalyzes proton efflux from endosomes and lysosomes to maintain a steady-state pH. Activated at low pH (under pH 4.6) by luminal side protons: selectively mediates lysosomal proton release from lysosomes, eliciting a proton leak that balances V-ATPase activity to maintain pH homeostasis. Regulation of lumenal pH stability is required for autophagosome-lysosome fusion. Also acts as a potassium channel at higher pH, regulating potassium conductance in endosomes and lysosomes. In Danio rerio (Zebrafish), this protein is Endosomal/lysosomal proton channel TMEM175.